We begin with the raw amino-acid sequence, 276 residues long: NADH-cytochrome b5 reductase 2 (276 aa).

The FAD-binding FR-type domain maps to 15–127; sequence EAKYPLPLIE…RGPTGRLFYN (113 aa). Residue K17 is modified to N6-acetyllysine. At Y18 the chain carries Phosphotyrosine. Residues 107 to 137 and 146 to 181 contribute to the FAD site; these read ENMKIGDTILFRGPTGRLFYNEPGTLLIKAN and LVHHLGMIAGGTGITPMLQLIRHITKDTSDETRMSL.

The protein belongs to the flavoprotein pyridine nucleotide cytochrome reductase family. Requires FAD as cofactor.

It catalyses the reaction 2 Fe(III)-[cytochrome b5] + NADH = 2 Fe(II)-[cytochrome b5] + NAD(+) + H(+). Its function is as follows. NADH-cytochrome b5 reductases are involved in desaturation and elongation of fatty acids, cholesterol biosynthesis, drug metabolism, and, in erythrocyte, methemoglobin reduction. Responsible for NADH-dependent lucigenin chemiluminescence in spermatozoa by reducing both lucigenin and 2-[4-iodophenyl]-3-[4-nitrophenyl]-5-[2,4-disulfophenyl]-2H tetrazolium monosodium salt (WST-1). The polypeptide is NADH-cytochrome b5 reductase 2 (Cyb5r2) (Mus musculus (Mouse)).